A 168-amino-acid chain; its full sequence is Pathogenesis-related protein 1C (168 aa).

A signal peptide spans 1 to 30 (MEFVLFSQMSSFFLVSTLLLFLIISHSCHA). In terms of domain architecture, SCP spans 38–156 (LDAHNTARAD…NGGYIVSCNY (119 aa)).

Belongs to the CRISP family. In terms of processing, three disulfide bonds are present.

Its subcellular location is the vacuole. Its function is as follows. Probably involved in the defense reaction of plants against pathogens. The polypeptide is Pathogenesis-related protein 1C (Nicotiana tabacum (Common tobacco)).